Here is a 578-residue protein sequence, read N- to C-terminus: 2-succinyl-5-enolpyruvyl-6-hydroxy-3-cyclohexene-1-carboxylate synthase (578 aa).

Belongs to the TPP enzyme family. MenD subfamily. In terms of assembly, homodimer. Mg(2+) is required as a cofactor. Mn(2+) serves as cofactor. Requires thiamine diphosphate as cofactor.

The enzyme catalyses isochorismate + 2-oxoglutarate + H(+) = 5-enolpyruvoyl-6-hydroxy-2-succinyl-cyclohex-3-ene-1-carboxylate + CO2. The protein operates within quinol/quinone metabolism; 1,4-dihydroxy-2-naphthoate biosynthesis; 1,4-dihydroxy-2-naphthoate from chorismate: step 2/7. It participates in quinol/quinone metabolism; menaquinone biosynthesis. Functionally, catalyzes the thiamine diphosphate-dependent decarboxylation of 2-oxoglutarate and the subsequent addition of the resulting succinic semialdehyde-thiamine pyrophosphate anion to isochorismate to yield 2-succinyl-5-enolpyruvyl-6-hydroxy-3-cyclohexene-1-carboxylate (SEPHCHC). In Bacillus velezensis (strain DSM 23117 / BGSC 10A6 / LMG 26770 / FZB42) (Bacillus amyloliquefaciens subsp. plantarum), this protein is 2-succinyl-5-enolpyruvyl-6-hydroxy-3-cyclohexene-1-carboxylate synthase.